The following is a 491-amino-acid chain: Monothiol glutaredoxin-S11 (491 aa).

Glutaredoxin domains are found at residues 151–253 (NKRL…NIPL), 287–389 (KERL…GIVA), and 394–491 (EDRL…TLSE). A glutathione-binding site is contributed by lysine 411. Cysteine 419 contacts [2Fe-2S] cluster. Glutathione contacts are provided by residues arginine 448, phenylalanine 460, and 473 to 474 (CD).

Belongs to the glutaredoxin family. CGFS subfamily.

Its subcellular location is the cytoplasm. In terms of biological role, may only reduce GSH-thiol disulfides, but not protein disulfides. In Oryza sativa subsp. japonica (Rice), this protein is Monothiol glutaredoxin-S11 (GRXS11).